We begin with the raw amino-acid sequence, 115 residues long: NAD(P)H-quinone oxidoreductase subunit M (115 aa).

Belongs to the complex I NdhM subunit family. In terms of assembly, NDH-1 can be composed of about 15 different subunits; different subcomplexes with different compositions have been identified which probably have different functions.

The protein localises to the cellular thylakoid membrane. The catalysed reaction is a plastoquinone + NADH + (n+1) H(+)(in) = a plastoquinol + NAD(+) + n H(+)(out). It carries out the reaction a plastoquinone + NADPH + (n+1) H(+)(in) = a plastoquinol + NADP(+) + n H(+)(out). NDH-1 shuttles electrons from an unknown electron donor, via FMN and iron-sulfur (Fe-S) centers, to quinones in the respiratory and/or the photosynthetic chain. The immediate electron acceptor for the enzyme in this species is believed to be plastoquinone. Couples the redox reaction to proton translocation, and thus conserves the redox energy in a proton gradient. Cyanobacterial NDH-1 also plays a role in inorganic carbon-concentration. This Prochlorococcus marinus (strain MIT 9215) protein is NAD(P)H-quinone oxidoreductase subunit M.